The following is a 368-amino-acid chain: tRNA-specific 2-thiouridylase MnmA (368 aa).

ATP contacts are provided by residues 11 to 18 (GMSGGVDS) and Met-37. Residues 97–99 (NPD) form an interaction with target base in tRNA region. Cys-102 (nucleophile) is an active-site residue. A disulfide bridge links Cys-102 with Cys-199. ATP is bound at residue Gly-127. Positions 149-151 (KDQ) are interaction with tRNA. Cys-199 functions as the Cysteine persulfide intermediate in the catalytic mechanism. The segment at 311-312 (RY) is interaction with tRNA.

It belongs to the MnmA/TRMU family. As to quaternary structure, interacts with TusE.

The protein localises to the cytoplasm. The catalysed reaction is S-sulfanyl-L-cysteinyl-[protein] + uridine(34) in tRNA + AH2 + ATP = 2-thiouridine(34) in tRNA + L-cysteinyl-[protein] + A + AMP + diphosphate + H(+). In terms of biological role, catalyzes the 2-thiolation of uridine at the wobble position (U34) of tRNA(Lys), tRNA(Glu) and tRNA(Gln), leading to the formation of s(2)U34, the first step of tRNA-mnm(5)s(2)U34 synthesis. Sulfur is provided by IscS, via a sulfur-relay system. Binds ATP and its substrate tRNAs. The protein is tRNA-specific 2-thiouridylase MnmA of Escherichia coli O6:H1 (strain CFT073 / ATCC 700928 / UPEC).